A 91-amino-acid chain; its full sequence is Small ribosomal subunit protein bS18 (91 aa).

It belongs to the bacterial ribosomal protein bS18 family. Part of the 30S ribosomal subunit. Forms a tight heterodimer with protein bS6.

In terms of biological role, binds as a heterodimer with protein bS6 to the central domain of the 16S rRNA, where it helps stabilize the platform of the 30S subunit. The chain is Small ribosomal subunit protein bS18 from Paraburkholderia phytofirmans (strain DSM 17436 / LMG 22146 / PsJN) (Burkholderia phytofirmans).